We begin with the raw amino-acid sequence, 276 residues long: Glucosamine-6-phosphate deaminase 2 (276 aa).

Residue D72 is the Proton acceptor; for enolization step of the active site. Residues 103–131 (NAHILDGNAADLQAECDAFEEKIKEAGGI) adopt a coiled-coil conformation. Catalysis depends on D141, which acts as the For ring-opening step. Catalysis depends on H143, which acts as the Proton acceptor; for ring-opening step. E148 functions as the For ring-opening step in the catalytic mechanism. T161 carries the phosphothreonine modification.

Belongs to the glucosamine/galactosamine-6-phosphate isomerase family. In terms of assembly, homohexamer.

It localises to the cytoplasm. It carries out the reaction alpha-D-glucosamine 6-phosphate + H2O = beta-D-fructose 6-phosphate + NH4(+). Its pathway is nucleotide-sugar biosynthesis; UDP-N-acetyl-alpha-D-glucosamine biosynthesis; alpha-D-glucosamine 6-phosphate from D-fructose 6-phosphate: step 1/1. Allosterically activated by N-acetylglucosamine-6-phosphate (GlcNAc6P). Its function is as follows. Catalyzes the reversible conversion of alpha-D-glucosamine 6-phosphate (GlcN-6P) into beta-D-fructose 6-phosphate (Fru-6P) and ammonium ion, a regulatory reaction step in de novo uridine diphosphate-N-acetyl-alpha-D-glucosamine (UDP-GlcNAc) biosynthesis via hexosamine pathway. Deamination is coupled to aldo-keto isomerization mediating the metabolic flux from UDP-GlcNAc toward Fru-6P. At high ammonium level can drive amination and isomerization of Fru-6P toward hexosamines and UDP-GlcNAc synthesis. Has a role in fine tuning the metabolic fluctuations of cytosolic UDP-GlcNAc and their effects on hyaluronan synthesis that occur during tissue remodeling. In Mus musculus (Mouse), this protein is Glucosamine-6-phosphate deaminase 2.